A 607-amino-acid chain; its full sequence is tRNA uridine 5-carboxymethylaminomethyl modification enzyme MnmG (607 aa).

FAD is bound by residues 11-16, Val-123, and Ser-178; that span reads GGGHAG. 270 to 284 is an NAD(+) binding site; it reads GPRYCPSVEDKIVRF. Position 367 (Gln-367) interacts with FAD.

It belongs to the MnmG family. As to quaternary structure, homodimer. Heterotetramer of two MnmE and two MnmG subunits. FAD serves as cofactor.

Its subcellular location is the cytoplasm. NAD-binding protein involved in the addition of a carboxymethylaminomethyl (cmnm) group at the wobble position (U34) of certain tRNAs, forming tRNA-cmnm(5)s(2)U34. The chain is tRNA uridine 5-carboxymethylaminomethyl modification enzyme MnmG from Metamycoplasma arthritidis (strain 158L3-1) (Mycoplasma arthritidis).